Reading from the N-terminus, the 688-residue chain is Collagen alpha-2(IX) chain (688 aa).

Residues 1-22 (MAPAADPRSLLVLLQVLGLALA) form the signal peptide. Residues 26 to 162 (GLPGEPGPPG…PGKPGRPGTI (137 aa)) are triple-helical region 4 (COL4). 3 disordered regions span residues 26-520 (GLPG…RDAS), 549-578 (GATG…PGPR), and 590-662 (IGNT…LPGF). Pro residues-rich tracts occupy residues 30-42 (EPGP…PPGV) and 105-126 (LPGP…PGPV). Low complexity predominate over residues 128-138 (LPGEIGLTGPK). A compositionally biased stretch (pro residues) spans 143–156 (PEGPSGPPGPPGKP). Residue Pro159 is modified to 4-hydroxyproline. The nonhelical region 4 (NC4) stretch occupies residues 163–179 (QGLEGSADFLCPTNCPA). Ser168 carries O-linked (Xyl...) (glycosaminoglycan) serine glycosylation. Residues 180 to 518 (GVKGPPGLQG…PGRQGVAGRD (339 aa)) are triple-helical region 3 (COL3). Lys182 is subject to 5-hydroxylysine. Lys182 carries O-linked (Gal...) hydroxylysine glycosylation. 2 stretches are compositionally biased toward low complexity: residues 251-265 (KGMV…SPGE) and 394-412 (PVGQ…EQGP). Residues 435 to 444 (GPRGGVGDPG) show a composition bias toward gly residues. Low complexity predominate over residues 497–506 (RGLVGDRGLP). The nonhelical region 3 (NC3) stretch occupies residues 519 to 548 (ASDQHIEDVVLKMLQEQLAEMAVSAKREAL). The triple-helical region 2 (COL2) stretch occupies residues 549 to 631 (GATGMMGPPG…PGLPGRPGQA (83 aa)). The span at 556–565 (PPGPPGPPGY) shows a compositional bias: pro residues. A compositionally biased stretch (basic and acidic residues) spans 598–610 (KRGEKGDQGEVGR). Residues 632–633 (IN) form a nonhelical region 2 (NC2) region. Positions 634 to 663 (GKDGDRGAPGAPGEAGRPGLPGPIGLPGFC) are triple-helical region 1 (COL1). A compositionally biased stretch (low complexity) spans 641–651 (APGAPGEAGRP). Residues 664-688 (EPAACLGASAYASGRLTEPGSIKGP) are nonhelical region 1 (NC1).

Belongs to the fibril-associated collagens with interrupted helices (FACIT) family. In terms of assembly, heterotrimer of an alpha 1(IX), an alpha 2(IX) and an alpha 3(IX) chain. The chains are linked to each other by interchain disulfide bonds. Trimers are also cross-linked via hydroxylysines. In terms of processing, prolines at the third position of the tripeptide repeating unit (G-X-Y) are hydroxylated in some or all of the chains. Covalently linked to the telopeptides of type II collagen by hydroxylysine-derived cross-links.

The protein resides in the secreted. Its subcellular location is the extracellular space. It localises to the extracellular matrix. Its function is as follows. Structural component of hyaline cartilage and vitreous of the eye. The chain is Collagen alpha-2(IX) chain from Bos taurus (Bovine).